Consider the following 307-residue polypeptide: Protoheme IX farnesyltransferase (307 aa).

The next 9 helical transmembrane spans lie at 31–51, 55–75, 103–123, 125–145, 153–173, 179–199, 223–243, 246–266, and 285–305; these read VTQL…PGMV, VLIG…AINC, TLVF…VYAN, LTMW…TILL, IVIG…AVAG, AWFL…ALAL, LLHI…PFVY, SGYI…AYAW, and ILYL…KFVP.

The protein belongs to the UbiA prenyltransferase family. Protoheme IX farnesyltransferase subfamily.

It is found in the cell inner membrane. The enzyme catalyses heme b + (2E,6E)-farnesyl diphosphate + H2O = Fe(II)-heme o + diphosphate. It participates in porphyrin-containing compound metabolism; heme O biosynthesis; heme O from protoheme: step 1/1. Functionally, converts heme B (protoheme IX) to heme O by substitution of the vinyl group on carbon 2 of heme B porphyrin ring with a hydroxyethyl farnesyl side group. The sequence is that of Protoheme IX farnesyltransferase from Cupriavidus necator (strain ATCC 17699 / DSM 428 / KCTC 22496 / NCIMB 10442 / H16 / Stanier 337) (Ralstonia eutropha).